The following is a 722-amino-acid chain: Probable ATP-dependent RNA helicase DDX4 (722 aa).

Residues 1–241 (MGDEDWEAEI…GESSDTQGPK (241 aa)) form a disordered region. Basic and acidic residues-rich tracts occupy residues 21–35 (FEKDGYSGENGDKFN) and 66–78 (GKRDAGESNKREN). Over residues 150–162 (RGSFRGCRGGFGL) the composition is skewed to gly residues. A phosphoserine mark is found at S220 and S224. Residues 226–245 (KSEAEGGESSDTQGPKVTYI) are interaction with RANBP9. Residues 286-314 (LTFEEANLCQTLNNNIAKAGYTKLTPVQK) carry the Q motif motif. Residues 317-500 (IPIILAGRDL…AEFLKSNYLF (184 aa)) form the Helicase ATP-binding domain. 330–337 (AQTGSGKT) is a binding site for ATP. A DEAD box motif is present at residues 444–447 (DEAD). The Helicase C-terminal domain occupies 528–673 (KLLEILRNIG…DVPAWLEEIA (146 aa)). Over residues 702–713 (LNTAGFSSSQAP) the composition is skewed to polar residues. The segment at 702-722 (LNTAGFSSSQAPNPVDDESWD) is disordered. S720 carries the phosphoserine modification.

It belongs to the DEAD box helicase family. DDX4/VASA subfamily. In terms of assembly, found in a mRNP complex, at least composed of TDRD1, TDRD6, TDRD7 and DDX4. Interacts with RANBP9. Interacts with RANBP10. Interacts with PIWIL2 and MAEL. Interacts with BMAL1 and CLOCK. Interacts with Tex19.1 and, probably, Tex19.2. Interacts with RBM46.

It is found in the cytoplasm. The protein resides in the perinuclear region. The enzyme catalyses ATP + H2O = ADP + phosphate + H(+). In terms of biological role, ATP-dependent RNA helicase required during spermatogenesis to repress transposable elements and preventing their mobilization, which is essential for the germline integrity. Acts via the piRNA metabolic process, which mediates the repression of transposable elements during meiosis by forming complexes composed of piRNAs and Piwi proteins and governs the methylation and subsequent repression of transposons. Involved in the secondary piRNAs metabolic process, the production of piRNAs in fetal male germ cells through a ping-pong amplification cycle. Required for PIWIL2 slicing-triggered piRNA biogenesis: helicase activity enables utilization of one of the slice cleavage fragments generated by PIWIL2 and processing these pre-piRNAs into piRNAs. The polypeptide is Probable ATP-dependent RNA helicase DDX4 (DDX4) (Sus scrofa (Pig)).